The chain runs to 104 residues: Large ribosomal subunit protein uL24 (104 aa).

This sequence belongs to the universal ribosomal protein uL24 family. Part of the 50S ribosomal subunit.

Functionally, one of two assembly initiator proteins, it binds directly to the 5'-end of the 23S rRNA, where it nucleates assembly of the 50S subunit. Its function is as follows. One of the proteins that surrounds the polypeptide exit tunnel on the outside of the subunit. This is Large ribosomal subunit protein uL24 from Photobacterium profundum (strain SS9).